Consider the following 291-residue polypeptide: ATP synthase gamma chain (291 aa).

It belongs to the ATPase gamma chain family. In terms of assembly, F-type ATPases have 2 components, CF(1) - the catalytic core - and CF(0) - the membrane proton channel. CF(1) has five subunits: alpha(3), beta(3), gamma(1), delta(1), epsilon(1). CF(0) has three main subunits: a, b and c.

The protein localises to the cell inner membrane. Functionally, produces ATP from ADP in the presence of a proton gradient across the membrane. The gamma chain is believed to be important in regulating ATPase activity and the flow of protons through the CF(0) complex. The polypeptide is ATP synthase gamma chain (Ruegeria sp. (strain TM1040) (Silicibacter sp.)).